Here is a 110-residue protein sequence, read N- to C-terminus: UPF0122 protein Sca_0859 (110 aa).

Belongs to the UPF0122 family.

Might take part in the signal recognition particle (SRP) pathway. This is inferred from the conservation of its genetic proximity to ftsY/ffh. May be a regulatory protein. The polypeptide is UPF0122 protein Sca_0859 (Staphylococcus carnosus (strain TM300)).